Reading from the N-terminus, the 222-residue chain is UPF0502 protein XCV4380 (222 aa).

It belongs to the UPF0502 family.

The chain is UPF0502 protein XCV4380 from Xanthomonas euvesicatoria pv. vesicatoria (strain 85-10) (Xanthomonas campestris pv. vesicatoria).